The sequence spans 907 residues: MALAKQIMGASLMDQKTSVFGSNLCLNHVLVNKHRLRLRKTRKNGSMVVAAISEDLVKLXRVEKEKPVTFKVRAVLTVRNKNKEDFFKDTIFRKIDAITDQIGWNVVIQLFSNDIDPRTRAAKKSNEAVLKDWSKKSNVKTERVNYTADIMVDSDFGIPGAITISNKHQKEFFLETITIEGFACGPVHFPCNSWVQSTKDLPNPRIFFTNQPYLPDETPVGLKSLRYQELKDLRGDGTGVRKLSDRIYDYDVYNDLGNPDRGNDFVRPTLGGEKIPYPRRCRTGRVPSDTDITAESRVEKPFPLYVPRDEQFEESKANAFSTGRLRAVLHNLLPSMVTSISKKNDFKGFSQIDSLYSEGVFLKLGLQDDLLKKLPLPNLVTRLHESSQGGGLLKYDTPKILSKDKFAWLRDDEFARQTIAGVNPVSIEKLKVFPPVSQLDPEKHGPQESALREEHIVGFLDGRTVKQAIEEDKLFIIDYHDIYLPFLDRINALDGRKAYATRTIFYLNPSGTLKPVAIELSLPQALPGSESKRVLTPPSDATSNWMWQLAKAHXCSNDAGAHQLVHHFLRTHAAIEPFILAAHRQLSAMHPIYKLLDPHMRYTLEINQLARQNLINADGVIEACFTPGRYGMEISASAYKNWRFDLEGLPADLIRRGMAVPDPSKPHGLKLVMEDYPYASDGLMIWEAIQNWVKTYVNHYYPDSAQVCNDRELQAWYAESINVGHADLRHKDWWPTLAGADDLTSVLTTIIWLASAQHAALNFGQYPYGGYIPNRPPLMRRLLPDVNDPEYLSFHDDPQKYFLSALPSLLQSTKYMAVVDTLSTHSPDEEYIGERQQTDTWSGDAEIVEAFYAFSAEIQRIEKEIEKRNSDTSLKNRCGAGVLPYELLAPSSGPGATCRGVPNSISI.

The N-terminal 49 residues, M1–V49, are a transit peptide targeting the chloroplast. Residues D85–T209 form the PLAT domain. Residues P212–I907 form the Lipoxygenase domain. Fe cation-binding residues include H567, H572, H758, N762, and I907.

This sequence belongs to the lipoxygenase family. Requires Fe cation as cofactor. As to expression, confined to glandular trichomes in flowers, and, at low levels, in leaves.

It is found in the plastid. The protein resides in the chloroplast. It catalyses the reaction (9Z,12Z,15Z)-octadecatrienoate + O2 = 13-hydroperoxy-(9Z,11E,15Z)-octadecatrienoate. It functions in the pathway lipid metabolism; oxylipin biosynthesis. The protein operates within isoprenoid biosynthesis. Its function is as follows. Component of the monoterpenoid pyrethrins biosynthesis; pyrethrins are widely used plant-derived pesticide. Plant lipoxygenases may be involved in a number of diverse aspects of plant physiology including growth and development, pest resistance, and senescence or responses to wounding. Catalyzes the hydroperoxidation of lipids containing a cis,cis-1,4-pentadiene structure. Mediates the peroxidation of linolenic acid leading to the production of 13-hydroperoxylinolenic acid. This Tanacetum cinerariifolium (Dalmatian daisy) protein is Lipoxygenase 1, chloroplastic.